A 236-amino-acid polypeptide reads, in one-letter code: Ribonuclease 3 (236 aa).

An RNase III domain is found at threonine 13–glycine 138. Residue glutamate 51 participates in Mg(2+) binding. Residue aspartate 55 is part of the active site. Asparagine 124 and glutamate 127 together coordinate Mg(2+). Glutamate 127 is a catalytic residue. Residues aspartate 164–lysine 232 form the DRBM domain.

The protein belongs to the ribonuclease III family. Homodimer. Mg(2+) serves as cofactor.

Its subcellular location is the cytoplasm. The enzyme catalyses Endonucleolytic cleavage to 5'-phosphomonoester.. In terms of biological role, digests double-stranded RNA. Involved in the processing of primary rRNA transcript to yield the immediate precursors to the large and small rRNAs (23S and 16S). Processes some mRNAs, and tRNAs when they are encoded in the rRNA operon. Processes pre-crRNA and tracrRNA of type II CRISPR loci if present in the organism. This Anaplasma phagocytophilum (strain HZ) protein is Ribonuclease 3.